The sequence spans 335 residues: Eukaryotic translation initiation factor 3 subunit I (335 aa).

WD repeat units lie at residues 8-47 (GHER…RLGT), 50-91 (GHQG…KTWD), 145-184 (CAES…LLFN), 189-228 (EPDL…VMKT), and 286-325 (GHFG…FDFT).

This sequence belongs to the eIF-3 subunit I family. Component of the eukaryotic translation initiation factor 3 (eIF-3) complex.

It is found in the cytoplasm. Component of the eukaryotic translation initiation factor 3 (eIF-3) complex, which is involved in protein synthesis of a specialized repertoire of mRNAs and, together with other initiation factors, stimulates binding of mRNA and methionyl-tRNAi to the 40S ribosome. The eIF-3 complex specifically targets and initiates translation of a subset of mRNAs involved in cell proliferation. The sequence is that of Eukaryotic translation initiation factor 3 subunit I (tif34) from Sclerotinia sclerotiorum (strain ATCC 18683 / 1980 / Ss-1) (White mold).